The chain runs to 187 residues: Large ribosomal subunit protein uL5 (187 aa).

It belongs to the universal ribosomal protein uL5 family. In terms of assembly, part of the 50S ribosomal subunit; part of the 5S rRNA/L5/L18/L25 subcomplex. Contacts the 5S rRNA and the P site tRNA. Forms a bridge to the 30S subunit in the 70S ribosome.

This is one of the proteins that bind and probably mediate the attachment of the 5S RNA into the large ribosomal subunit, where it forms part of the central protuberance. In the 70S ribosome it contacts protein S13 of the 30S subunit (bridge B1b), connecting the 2 subunits; this bridge is implicated in subunit movement. Contacts the P site tRNA; the 5S rRNA and some of its associated proteins might help stabilize positioning of ribosome-bound tRNAs. The sequence is that of Large ribosomal subunit protein uL5 from Ruegeria sp. (strain TM1040) (Silicibacter sp.).